The chain runs to 114 residues: uncharacterized protein (114 aa).

A helical membrane pass occupies residues 7–27 (YIFSFWFFFLVEYVVTFRLFL). The segment at 90–114 (KNSPEKKKFKRGLPISSKYTDGKKR) is disordered.

It is found in the membrane. This is an uncharacterized protein from Saccharomyces cerevisiae (strain ATCC 204508 / S288c) (Baker's yeast).